The sequence spans 1160 residues: Protein translocase subunit SecA (1160 aa).

ATP is bound by residues Gln162 and 180–184; that span reads GEGKT. The interval 342 to 362 is disordered; sequence LLEEKEEAEEEGDSRRAQELE. A compositionally biased stretch (acidic residues) spans 344-353; sequence EEKEEAEEEG. Residue Asp726 participates in ATP binding. The disordered stretch occupies residues 1060 to 1134; it reads EVQTEGQGPR…RNEYVTVRNN (75 aa). Residues 1074–1083 show a composition bias toward polar residues; that stretch reads QRNAQTQHDS. A compositionally biased stretch (basic and acidic residues) spans 1104-1115; that stretch reads AAERDPTVEEKQ.

Belongs to the SecA family. Monomer and homodimer. Part of the essential Sec protein translocation apparatus which comprises SecA, SecYEG and auxiliary proteins SecDF. Other proteins may also be involved.

Its subcellular location is the cell inner membrane. It is found in the cytoplasm. The catalysed reaction is ATP + H2O + cellular proteinSide 1 = ADP + phosphate + cellular proteinSide 2.. In terms of biological role, part of the Sec protein translocase complex. Interacts with the SecYEG preprotein conducting channel. Has a central role in coupling the hydrolysis of ATP to the transfer of proteins into and across the cell membrane, serving as an ATP-driven molecular motor driving the stepwise translocation of polypeptide chains across the membrane. The polypeptide is Protein translocase subunit SecA (Salinibacter ruber (strain DSM 13855 / M31)).